The sequence spans 190 residues: Elongation factor P-like protein (190 aa).

Belongs to the elongation factor P family.

The polypeptide is Elongation factor P-like protein (Pectobacterium atrosepticum (strain SCRI 1043 / ATCC BAA-672) (Erwinia carotovora subsp. atroseptica)).